The sequence spans 161 residues: Allophycocyanin subunit alpha-B (161 aa).

Asn71 carries the post-translational modification N4-methylasparagine. Cys81 lines the (2R,3E)-phycocyanobilin pocket.

It belongs to the phycobiliprotein family. As to quaternary structure, heterodimer of an alpha-B and a beta chain forming AP-B. Post-translationally, contains one covalently linked bilin chromophore. The chromophore is added by phycocyanobilin lyase CpcUS.

It is found in the cellular thylakoid membrane. Functionally, a variant alpha-allophycocyanin (AP) which forms a complex with beta-AP with maximum absorption at approximately 670 nanometers. It is an important phycobilisome terminal emitter involved in energy transfer to photosystem I. In Picosynechococcus sp. (strain ATCC 27264 / PCC 7002 / PR-6) (Agmenellum quadruplicatum), this protein is Allophycocyanin subunit alpha-B (apcD).